Consider the following 447-residue polypeptide: Mannose/glucose-specific lectin (447 aa).

Jacalin-type lectin domains follow at residues 5–148 (MISV…FVKP), 153–294 (TISF…YVKP), and 300–443 (SISI…FVKP).

The protein belongs to the jacalin lectin family. In terms of tissue distribution, expressed in seeds (at protein level).

Hemagglutinating activity is slightly inhibited by alpha-methyl-D-mannopyranoside. Its function is as follows. D-mannose/D-glucose-binding lectin that also binds derivatives N-acetyl-D-glucosamine and alpha-methyl-D-mannopyranoside. Does not bind D-galactose, L-Rhamnose, D-fructose, lactose or glycoproteins fetiun and mucin. Shows agglutinating activity towards human and rabbit erythrocytes. Also displays antimicrobial activity against L.infantum. In Parkia pendula (Inga pendula), this protein is Mannose/glucose-specific lectin.